The chain runs to 1006 residues: DNA polymerase (1006 aa).

The protein belongs to the DNA polymerase type-B family. Interacts with OPG148/A20. Component of the Uracil-DNA glycosylase(UDG)-OPG148/A20-polymerase complex; OPG148/A20 and OPG116/UDG form a heterodimeric processivity factor that associates with OPG071/E9 to form the processive polymerase holoenzyme.

The catalysed reaction is DNA(n) + a 2'-deoxyribonucleoside 5'-triphosphate = DNA(n+1) + diphosphate. Catalyzes DNA synthesis. Acquires processivity by associating with a heterodimeric processivity factor comprised of the viral OPG148/A20 and OPG116/D4 proteins, thereby forming the DNA polymerase holoenzyme. Displays 3'- to 5' exonuclease activity. Might participate in viral DNA recombination. Does not perform OPG116/D4synthesis across an abasic site. The protein is DNA polymerase (OPG071) of Bos taurus (Bovine).